The sequence spans 155 residues: Ribosome maturation factor RimP (155 aa).

It belongs to the RimP family.

It is found in the cytoplasm. Required for maturation of 30S ribosomal subunits. This chain is Ribosome maturation factor RimP, found in Synechococcus sp. (strain RCC307).